The sequence spans 102 residues: Carboxysome shell protein CcmK2 (102 aa).

The 87-residue stretch at 4–90 folds into the BMC domain; it reads AVGMIETLGF…PHENLEYVLP (87 aa).

It belongs to the bacterial microcompartments protein family. CcmK subfamily. As to quaternary structure, homohexamer. Interacts with CcmO in the carboxysome. Interacts with CcmN.

It localises to the carboxysome. One of the shell proteins of the carboxysome, a polyhedral inclusion where RuBisCO (ribulose bisphosphate carboxylase, rbcL-rbcS) is sequestered. Assembles into hexamers which make sheets that form the facets of the polyhedral carboxysome. The hexamer central pore probably regulates metabolite flux. In terms of biological role, the major shell protein of the carboxysome, a polyhedral inclusion where RuBisCO (ribulose bisphosphate carboxylase, rbcL-rbcS) is sequestered. Hexamers make sheets that form the facets of the polyhedral carboxysome. The shell is 4.5 nm thick, as observed for CcmK hexamers. Required for recruitment of CcmO to the pre-carboxysome. In PCC 7942 there are several CcmK paralogs with presumably functional differences; replacing the central pore residues (34-37) with those of either CcmK4 from this organism (Tyr-Met-Arg-Ala) or from an alpha-type carboxysome forming cyanobacterium (CsoS1 of P.marinus strain MIT 9313, Arg-Glu-Phe-Val) allows the bacterium to make carboxysomes, but the expression level is too low to know if the carboxysome is functional for CO(2) fixation. Functionally, beta-carboxysome assembly initiates when soluble RuBisCO is condensed into a liquid matrix in a pre-carboxysome by the RbcS-like domains of probably both CcmM58 and CcmM35. CcmN interacts with the N-terminus of CcmM58, and then recruits the CcmK2 major shell protein via CcmN's encapsulation peptide. Shell formation requires CcmK proteins and CcmO. CcmL caps the otherwise elongated carboxysome. Once fully encapsulated carboxysomes are formed, they migrate within the cell probably via interactions with the cytoskeleton. In Synechococcus elongatus (strain ATCC 33912 / PCC 7942 / FACHB-805) (Anacystis nidulans R2), this protein is Carboxysome shell protein CcmK2.